Consider the following 76-residue polypeptide: Large ribosomal subunit protein uL24 (76 aa).

It belongs to the universal ribosomal protein uL24 family. As to quaternary structure, part of the 50S ribosomal subunit.

In terms of biological role, one of two assembly initiator proteins, it binds directly to the 5'-end of the 23S rRNA, where it nucleates assembly of the 50S subunit. Functionally, one of the proteins that surrounds the polypeptide exit tunnel on the outside of the subunit. The sequence is that of Large ribosomal subunit protein uL24 from Sulfurimonas denitrificans (strain ATCC 33889 / DSM 1251) (Thiomicrospira denitrificans (strain ATCC 33889 / DSM 1251)).